Consider the following 201-residue polypeptide: Large ribosomal subunit protein uL4 (201 aa).

Residues alanine 45–glycine 66 are disordered.

It belongs to the universal ribosomal protein uL4 family. As to quaternary structure, part of the 50S ribosomal subunit.

Functionally, one of the primary rRNA binding proteins, this protein initially binds near the 5'-end of the 23S rRNA. It is important during the early stages of 50S assembly. It makes multiple contacts with different domains of the 23S rRNA in the assembled 50S subunit and ribosome. Forms part of the polypeptide exit tunnel. This chain is Large ribosomal subunit protein uL4, found in Baumannia cicadellinicola subsp. Homalodisca coagulata.